The chain runs to 297 residues: Ubiquinone biosynthesis protein COQ4, mitochondrial (297 aa).

Residues Met-1 to Glu-54 constitute a mitochondrion transit peptide. Residues His-178, Asp-179, His-182, and Glu-194 each contribute to the Zn(2+) site.

The protein belongs to the COQ4 family. In terms of assembly, component of a multi-subunit COQ enzyme complex, composed of at least COQ3, COQ4, COQ5, COQ6, COQ7 and COQ9. Zn(2+) is required as a cofactor.

The protein localises to the mitochondrion inner membrane. The enzyme catalyses a 4-hydroxy-3-methoxy-5-(all-trans-polyprenyl)benzoate + H(+) = a 2-methoxy-6-(all-trans-polyprenyl)phenol + CO2. The protein operates within cofactor biosynthesis; ubiquinone biosynthesis. Its function is as follows. Lyase that catalyzes the C1-decarboxylation of 4-hydroxy-3-methoxy-5-(all-trans-polyprenyl)benzoic acid into 2-methoxy-6-(all-trans-polyprenyl)phenol during ubiquinone biosynthesis. The polypeptide is Ubiquinone biosynthesis protein COQ4, mitochondrial (Laccaria bicolor (strain S238N-H82 / ATCC MYA-4686) (Bicoloured deceiver)).